A 582-amino-acid chain; its full sequence is Leucine-rich repeat protein SHOC-2 (582 aa).

Basic and acidic residues-rich tracts occupy residues 1–29 (MSSSLGKEKDSKEKDPKVPSAKEREKEAK) and 36–57 (KESKEKEPKTKGKDAKDGKKDS). The tract at residues 1 to 88 (MSSSLGKEKD…PGTRKKSSNA (88 aa)) is disordered. The short motif at 63 to 66 (GVAF) is the RVxF motif; important for interaction with PP1c element. 20 LRR repeats span residues 101–122 (NSMRLDLSKRSIHILPSSIKEL), 124–145 (QLTELYLYSNKLQSLPAEVGCL), 147–169 (NLMTLALSENSLTSLPDSLDNLK), 170–191 (KLRMLDLRHNKLREIPSVVYRL), 193–214 (SLTTLYLRFNRITTVEKDIKNL), 216–237 (KLSMLSIRENKIKQLPAEIGEL), 239–260 (NLITLDVAHNQLEHLPKEIGNC), 262–283 (QITNLDLQHNELLDLPDTIGNL), 285–307 (SLSRLGLRYNRLSAIPRSLAKCS), 308–329 (ALEELNLENNNISTLPESLLSS), 332–353 (KLNSLTLARNCFQLYPVGGPSQ), 356–377 (TIYSLNMEHNRINKIPFGIFSR), 380–400 (VLSKLNMKDNQLTSLPLDFGT), 403–424 (SMVELNLATNQLTKIPEDVSGL), 426–448 (SLEVLILSNNLLKKLPHGLGNLR), 449–470 (KLRELDLEENKLESLPNEIAYL), 472–494 (DLQKLVLTNNQLTTLPRGIGHLT), 495–516 (NLTHLGLGENLLTHLPEEIGTL), 518–540 (NLEELYLNDNPNLHSLPFELALC), and 542–563 (KLSIMSIENCPLSHLPPQIVAG).

It belongs to the SHOC2 family. Component of the SHOC2-MRAS-PP1c (SMP) complex consisting of SHOC2, GTP-bound M-Ras/MRAS and the catalytic subunit of protein phosphatase 1 (either PPP1CA, PPP1CB or PPP1CC). SHOC2 and PP1c preferably bind M-Ras/MRAS, but they also bind K-Ras/KRAS, N-Ras/NRAS and H-Ras/HRAS; these interactions are GTP-dependent and both SHOC2 and PP1c are required to form a stable complex. Interacts with PP1c in the absence of Ras GTPases. Interacts with M-Ras/MRAS and RAF1. Interacts with ERBIN; disrupts the interaction with RAF1 and Ras, preventing the activation of the Ras signaling pathway. Interacts with LZTR1.

The protein resides in the cytoplasm. It localises to the nucleus. Functionally, core component of the SHOC2-MRAS-PP1c (SMP) holophosphatase complex that regulates activation of the MAPK pathway. Acts as a scaffolding protein in the SMP complex. The SMP complex specifically dephosphorylates the inhibitory phosphorylation at 'Ser-259' of RAF1 kinase, 'Ser-365' of BRAF kinase and 'Ser-214' of ARAF kinase, stimulating their kinase activities. The SMP complex enhances the dephosphorylation activity and substrate specificity of PP1c. This Homo sapiens (Human) protein is Leucine-rich repeat protein SHOC-2 (SHOC2).